The chain runs to 1501 residues: Pleiotropic ABC efflux transporter of multiple drugs CDR1 (1501 aa).

Residues 1 to 30 are disordered; sequence MSDSKMSSQDESKLEKAISQDSSSENHSIN. Residues 1-513 are Cytoplasmic-facing; that stretch reads MSDSKMSSQD…NFLRMKGDPS (513 aa). The segment at 2-512 is NBD1; that stretch reads SDSKMSSQDE…RNFLRMKGDP (511 aa). The span at 8-18 shows a compositional bias: basic and acidic residues; that stretch reads SQDESKLEKAI. The ABC transporter 1 domain occupies 150 to 404; the sequence is LATEGFRHFQ…FEKMGWKCPQ (255 aa). The chain crosses the membrane as a helical span at residues 514 to 534; it reads IPIFSVFGQLVMGLILSSVFY. The Extracellular segment spans residues 535–548; sequence NLSQTTGSFYYRGA. A helical membrane pass occupies residues 549 to 569; it reads AMFFAVLFNAFSSLLEIMSLF. At 570–597 the chain is on the cytoplasmic side; that stretch reads EARPIVEKHKKYALYRPSADALASIISE. A helical membrane pass occupies residues 598–618; sequence LPVKLAMSMSFNFVFYFMVNF. Over 619 to 622 the chain is Extracellular; it reads RRNP. The helical transmembrane segment at 623-643 threads the bilayer; sequence GRFFFYWLMCIWCTFVMSHLF. The Cytoplasmic portion of the chain corresponds to 644-654; it reads RSIGAVSTSIS. Residues 655–675 traverse the membrane as a helical segment; sequence GAMTPATVLLLAMVIYTGFVI. Topologically, residues 676-764 are extracellular; that stretch reads PTPSMLGWSR…QYYNSHKWRN (89 aa). Residues 765–785 form a helical membrane-spanning segment; it reads LGITIGFAVFFLAIYIALTEF. At 786-1195 the chain is on the cytoplasmic side; that stretch reads NKGAMQKGEI…TIVQDWRSPG (410 aa). The tract at residues 786–1195 is NBD2; it reads NKGAMQKGEI…TIVQDWRSPG (410 aa). The 245-residue stretch at 859-1103 folds into the ABC transporter 2 domain; sequence FFWRDLTYQV…MINYFEKYGA (245 aa). 895–902 is a binding site for ATP; the sequence is GASGAGKT. A coiled-coil region spans residues 1137 to 1164; that stretch reads RNSSEYQAVREEINRMEAELSKLPRDND. The helical transmembrane segment at 1196 to 1216 threads the bilayer; sequence YIYSKIFLVVSAALFNGFSFF. Over 1217–1229 the chain is Extracellular; it reads KAKNNMQGLQNQM. The helical transmembrane segment at 1230-1250 threads the bilayer; the sequence is FSVFMFFIPFNTLVQQMLPYF. The Cytoplasmic segment spans residues 1251 to 1280; the sequence is VKQRDVYEVREAPSRTFSWFAFIAGQITSE. The helical transmembrane segment at 1281–1301 threads the bilayer; it reads IPYQVAVGTIAFFCWYYPLGL. Topologically, residues 1302 to 1314 are extracellular; sequence YNNATPTDSVNPR. A helical transmembrane segment spans residues 1315-1335; that stretch reads GVLMWMLVTAFYVYTATMGQL. At 1336–1355 the chain is on the cytoplasmic side; that stretch reads CMSFSELADNAANLATLLFT. Residues 1356–1376 form a helical membrane-spanning segment; sequence MCLNFCGVLAGPDVLPGFWIF. The Extracellular portion of the chain corresponds to 1377–1466; that stretch reads MYRCNPFTYL…NSLYSERWRN (90 aa). The helical transmembrane segment at 1467 to 1487 threads the bilayer; the sequence is FGIFIAFIAINIILTVIFYWL. Residues 1488–1501 lie on the Cytoplasmic side of the membrane; the sequence is ARVPKGNREKKNKK.

Belongs to the ABC transporter superfamily.

The protein resides in the cell membrane. With respect to regulation, disulfiram reverses CDR1-mediated drug resistance by interaction with both ATP and substrate-binding sites of the transporter and may be useful for antifungal therapy. In terms of biological role, pleiotropic ABC efflux transporter that confers resistance to numerous chemicals including anisomycin, cycloheximide, fluconazole, miconazole, ketoconazole, itriconazole, nystatin, terbinafine, amorolfine, brefeldin A, amphotericin B, fluphenazine, as well as estrogen. Plays a role in farnesol-induced apoptotic process through glutathione efflux activity. Mediates in-to-out translocation of membrane phospholipids including aminophospholipids and thus regulates asymmetric distribution of phosphatidylethanolamine. Exhibits nucleoside triphosphatase activity. In Candida albicans (strain SC5314 / ATCC MYA-2876) (Yeast), this protein is Pleiotropic ABC efflux transporter of multiple drugs CDR1 (CDR1).